The sequence spans 96 residues: Neutrophil defensin 1 (96 aa).

The first 19 residues, 1 to 19, serve as a signal peptide directing secretion; the sequence is MRTLVILAAILLVALQAQA. Residues 20–66 constitute a propeptide that is removed on maturation; that stretch reads EPLQARTDEATAAQEQIPTDNPEVVVSLAWDESLAPKDSVPGLRKNM. 3 disulfides stabilise this stretch: C68/C96, C70/C85, and C75/C95. Y87 is modified (phosphotyrosine).

Tetramer. Dimer. Interacts with RETN. ADP-ribosylation drastically reduces cytotoxic and antibacterial activities, and enhances IL8 production.

It is found in the secreted. Functionally, effector molecule of the innate immune system that acts via antibiotic-like properties against a broad array of infectious agents including bacteria, fungi, and viruses or by promoting the activation and maturation of some APCs. Interacts with the essential precursor of cell wall synthesis lipid II to inhibit bacterial cell wall synthesis. Inhibits adenovirus infection via inhibition of viral disassembly at the vertex region, thereby restricting the release of internal capsid protein pVI, which is required for endosomal membrane penetration during cell entry. In addition, interaction with adenovirus capsid leads to the redirection of viral particles to TLR4 thereby promoting a NLRP3-mediated inflammasome response and interleukin 1-beta (IL-1beta) release. Induces the production of proinflammatory cytokines including type I interferon (IFN) in plasmacytoid dendritic cells (pDCs) by triggering the degradation of NFKBIA and nuclear translocation of IRF1, both of which are required for activation of pDCs. The polypeptide is Neutrophil defensin 1 (Macaca mulatta (Rhesus macaque)).